A 672-amino-acid chain; its full sequence is Rho GTPase-activating protein 40 (672 aa).

Positions 43 to 68 are disordered; sequence GCSPGLSTGPTNLQQHPQKPRPADCS. A compositionally biased stretch (polar residues) spans 47-59; that stretch reads GLSTGPTNLQQHP. Residues 321 to 519 form the Rho-GAP domain; that stretch reads VPLHSLLEAD…MMVQYQDLLW (199 aa).

Functionally, GTPase activator for the Rho-type GTPases by converting them to an inactive GDP-bound state. This chain is Rho GTPase-activating protein 40, found in Mus musculus (Mouse).